The sequence spans 404 residues: MSHAIDELQAIIADLKTELETEPKSSVGVASNSRLARDRIDRMSAEVVDSNPYSRLMALQRMNIVKDYERIRDKAVAIVGVGGVGSVTADMLTRCGIGKLILFDYDKVELANMNRLFFTPDQAGLSKVAAAAATLSFINPDVEIETHNYNITTVENFDRFLDTISQGGRIAGQPVDLVLSCVDNFEARMAINAACNERNLNWFESGVSENAVSGHIQFIRPGDTACFACAPPLVVAENIDEKTLKREGVCAASLPTTMGITAGFLVQNALKYLLNFGEVSDYLGYNALSDFFPKMTLKPNPQCDDRNCIVRQKEFQARPKPVVIEEKAVSEEPLHATNEWGIELVAEDAPQSNPTPAETPVMGEGLRLAYEAPEKSSETSEETVTAATADETSLEDLMAQMKSM.

Residues G83, D104, K127, N150, and N184 each contribute to the ATP site. 2 residues coordinate Zn(2+): C226 and C229. Catalysis depends on C250, which acts as the Glycyl thioester intermediate. C303 and C308 together coordinate Zn(2+). The tract at residues 372–393 (APEKSSETSEETVTAATADETS) is disordered. The span at 382–391 (ETVTAATADE) shows a compositional bias: low complexity.

This sequence belongs to the ubiquitin-activating E1 family. UBA5 subfamily.

Functionally, E1-like enzyme which activates UFM1. The protein is Ubiquitin-like modifier-activating enzyme 5 of Drosophila sechellia (Fruit fly).